The following is a 176-amino-acid chain: Ribosome maturation factor RimM (176 aa).

A PRC barrel domain is found at 101-170 (EGEYFESDLI…RITVELPEGL (70 aa)).

This sequence belongs to the RimM family. In terms of assembly, binds ribosomal protein uS19.

It localises to the cytoplasm. In terms of biological role, an accessory protein needed during the final step in the assembly of 30S ribosomal subunit, possibly for assembly of the head region. Essential for efficient processing of 16S rRNA. May be needed both before and after RbfA during the maturation of 16S rRNA. It has affinity for free ribosomal 30S subunits but not for 70S ribosomes. The sequence is that of Ribosome maturation factor RimM from Solibacter usitatus (strain Ellin6076).